We begin with the raw amino-acid sequence, 512 residues long: Mucin-13 (512 aa).

A signal peptide spans 1-18 (MKAIIHLTLLALLSVNTA). Over 19–421 (TNQGNSADAV…GLDCKDKFQL (403 aa)) the chain is Extracellular. The segment covering 22–38 (GNSADAVTTTETATSGP) has biased composition (polar residues). Disordered stretches follow at residues 22–67 (GNSA…PTAT) and 133–176 (MVPS…PSNP). Residues 53–67 (TASTTANTPSFPTAT) are compositionally biased toward low complexity. The segment covering 135–176 (PSETQSNNEMSPTTEDNQSSGPPTGTALLETSTLNSTGPSNP) has biased composition (polar residues). 2 N-linked (GlcNAc...) asparagine glycosylation sites follow: Asn151 and Asn169. The region spanning 173 to 211 (PSNPCQDDPCADNSLCVKLHNTSFCLCLEGYYYNSSTCK) is the EGF-like 1 domain. 3 disulfide bridges follow: Cys177-Cys188, Cys182-Cys197, and Cys199-Cys210. 4 N-linked (GlcNAc...) asparagine glycosylation sites follow: Asn193, Asn206, Asn284, and Asn332. In terms of domain architecture, SEA spans 212 to 336 (KGKVFPGKIS…DYYGCNQTAD (125 aa)). EGF-like domains are found at residues 322-361 (LTLR…PFCV) and 363-404 (SSLK…GNCQ). Cystine bridges form between Cys326-Cys338, Cys331-Cys344, Cys346-Cys360, Cys367-Cys378, Cys371-Cys389, and Cys391-Cys403. A helical transmembrane segment spans residues 422–442 (ILTIVGTIAGIVILSMIIALI). Topologically, residues 443 to 512 (VTARSNNKTK…RHSSMPRPDY (70 aa)) are cytoplasmic. Over residues 493–505 (RDSQMQNPYSRHS) the composition is skewed to polar residues. Positions 493–512 (RDSQMQNPYSRHSSMPRPDY) are disordered.

In terms of assembly, homodimer of beta subunits. Cleaved into two subunits, alpha and beta, probably between the first EGF domain and the SEA domain. Beta subunit contains the cytoplasmic tail and alpha subunit the extracellular tail. The homooligomerization into dimers is dependent on intrachain disulfide bonds. In terms of processing, highly N-glycosylated. As to expression, highly expressed in epithelial tissues, particularly those of the gastrointestinal and respiratory tracts, such as large intestine and trachea, followed by kidney, small intestine, appendix and stomach.

It localises to the cell membrane. It is found in the apical cell membrane. Its subcellular location is the secreted. Epithelial and hemopoietic transmembrane mucin that may play a role in cell signaling. The protein is Mucin-13 (MUC13) of Homo sapiens (Human).